Reading from the N-terminus, the 236-residue chain is MATPHINAVDGAFADTVLFPGDPLRAKYIAETFLENVEQVTDVRNMLGFTGTYKGVRISVMGSGMGIPSCSIYATELIKDYGVKNLIRVGTCGAISTDVKVRDVIIGMGACTDSQVNRLRFKGQDFAAICDYSLLSAVVKAAEEKGTKYRVGNVFSADLFYTPDPEMFDVMEKMDVLGVEMEAAGLYGVAKEFGAKALCVVTVSDHIRTGEKTSSDERQTTFNEMIEMTLEAAITL.

A purine D-ribonucleoside is bound at residue histidine 5. Residues glycine 21, arginine 25, arginine 44, and 88–91 (RVGT) contribute to the phosphate site. Residues 180–182 (EME) and 204–205 (SD) contribute to the a purine D-ribonucleoside site. Aspartate 205 functions as the Proton donor in the catalytic mechanism.

This sequence belongs to the PNP/UDP phosphorylase family. As to quaternary structure, homohexamer; trimer of homodimers.

The enzyme catalyses a purine D-ribonucleoside + phosphate = a purine nucleobase + alpha-D-ribose 1-phosphate. It carries out the reaction a purine 2'-deoxy-D-ribonucleoside + phosphate = a purine nucleobase + 2-deoxy-alpha-D-ribose 1-phosphate. Functionally, catalyzes the reversible phosphorolytic breakdown of the N-glycosidic bond in the beta-(deoxy)ribonucleoside molecules, with the formation of the corresponding free purine bases and pentose-1-phosphate. This Shewanella loihica (strain ATCC BAA-1088 / PV-4) protein is Purine nucleoside phosphorylase DeoD-type.